Consider the following 141-residue polypeptide: Nucleoside triphosphatase NudI (141 aa).

A Nudix hydrolase domain is found at 1-141; the sequence is MRQRTIVCPL…RKTLRLKGLL (141 aa). Residues 38–59 carry the Nudix box motif; the sequence is GGVEPGERIEEALRREIREELG.

This sequence belongs to the Nudix hydrolase family. NudI subfamily. In terms of assembly, monomer. Requires Mg(2+) as cofactor.

It catalyses the reaction a ribonucleoside 5'-triphosphate + H2O = a ribonucleoside 5'-phosphate + diphosphate + H(+). It carries out the reaction a 2'-deoxyribonucleoside 5'-triphosphate + H2O = a 2'-deoxyribonucleoside 5'-phosphate + diphosphate + H(+). The catalysed reaction is dUTP + H2O = dUMP + diphosphate + H(+). The enzyme catalyses dTTP + H2O = dTMP + diphosphate + H(+). It catalyses the reaction dCTP + H2O = dCMP + diphosphate + H(+). In terms of biological role, catalyzes the hydrolysis of nucleoside triphosphates, with a preference for pyrimidine deoxynucleoside triphosphates (dUTP, dTTP and dCTP). This Escherichia coli O17:K52:H18 (strain UMN026 / ExPEC) protein is Nucleoside triphosphatase NudI.